The sequence spans 84 residues: Small ribosomal subunit protein bS20 (84 aa).

Residues 1-28 (MPNIKSAIKRVKTADTRNSRNASQRSAM) are disordered.

Belongs to the bacterial ribosomal protein bS20 family.

Functionally, binds directly to 16S ribosomal RNA. This is Small ribosomal subunit protein bS20 from Listeria welshimeri serovar 6b (strain ATCC 35897 / DSM 20650 / CCUG 15529 / CIP 8149 / NCTC 11857 / SLCC 5334 / V8).